The following is a 196-amino-acid chain: Adenylate kinase (196 aa).

Gly9–Thr17 is a binding site for ATP.

Belongs to the archaeal adenylate kinase family.

Its subcellular location is the cytoplasm. The catalysed reaction is AMP + ATP = 2 ADP. In Pyrococcus furiosus (strain ATCC 43587 / DSM 3638 / JCM 8422 / Vc1), this protein is Adenylate kinase.